A 615-amino-acid chain; its full sequence is Hypermethylated in cancer 2 protein (615 aa).

The BTB domain occupies 46 to 109; that stretch reads CDVIIMVENS…IYTGKLLPSD (64 aa). A disordered region spans residues 144–167; the sequence is KPFGSGRAGSTGMGRPPRSQRLST. Phosphoserine is present on residues Ser166, Ser169, and Ser197. Disordered regions lie at residues 182–208 and 229–421; these read RKGA…GSNQ and GCSS…SGHA. A binding to CtBP region spans residues 246 to 250; that stretch reads GLDLS. The segment covering 280–296 has biased composition (low complexity); it reads SPPAASAPPVANSASYS. Basic and acidic residues predominate over residues 336-356; the sequence is KKEWGKKEPVAGSPFERREAG. Ser348 carries the phosphoserine modification. Residues 379-388 show a composition bias toward low complexity; sequence ASGAGPSGPY. Phosphoserine is present on Ser412. C2H2-type zinc fingers lie at residues 442–469, 505–532, 533–560, 561–588, and 589–615; these read YVCI…EEEL, FKCS…LTRP, FPCN…GLKP, FACD…GEKP, and YECQ…TSPS.

Belongs to the krueppel C2H2-type zinc-finger protein family. Hic subfamily. In terms of assembly, self-associates. Interacts with HIC1. As to expression, highest levels in cerebellum.

The protein localises to the nucleus. Its function is as follows. Transcriptional repressor. The sequence is that of Hypermethylated in cancer 2 protein (HIC2) from Homo sapiens (Human).